Reading from the N-terminus, the 389-residue chain is Chalcone synthase 9 (389 aa).

Residue C164 is part of the active site.

Belongs to the thiolase-like superfamily. Chalcone/stilbene synthases family.

It catalyses the reaction (E)-4-coumaroyl-CoA + 3 malonyl-CoA + 3 H(+) = 2',4,4',6'-tetrahydroxychalcone + 3 CO2 + 4 CoA. The protein operates within secondary metabolite biosynthesis; flavonoid biosynthesis. Functionally, the primary product of this enzyme is 4,2',4',6'-tetrahydroxychalcone (also termed naringenin-chalcone or chalcone) which can under specific conditions spontaneously isomerize into naringenin. The chain is Chalcone synthase 9 (CHS9) from Daucus carota (Wild carrot).